The primary structure comprises 73 residues: Dermaseptin-H4 (73 aa).

Positions 1-22 are cleaved as a signal peptide; the sequence is MAFMKKSLFLVLFLGMVSLSIC. Residues 23–43 constitute a propeptide that is removed on maturation; sequence EEEKRENEDEAKQEDDEQSEM. The interval 25–45 is disordered; that stretch reads EKRENEDEAKQEDDEQSEMKR. The span at 30–40 shows a compositional bias: acidic residues; it reads EDEAKQEDDEQ. Leucine amide is present on L70. Positions 72–73 are excised as a propeptide; it reads EQ.

As to expression, expressed by the skin glands.

Its subcellular location is the secreted. Functionally, has antibacterial activity against the Gram-negative bacteria E.coli ATCC 11775 (MIC=0.8 uM), and the Gram-positive bacteria S.aureus ATCC 12600 (MIC=0.4 uM) and M.luteus ATCC 49732 (MIC=0.8 uM). Does not inhibit the growth of the fungus C.albicans. Probably acts by disturbing membrane functions with its amphipathic structure. The protein is Dermaseptin-H4 of Pithecopus azureus (Orange-legged monkey tree frog).